The following is a 406-amino-acid chain: Indole-3-pyruvate monooxygenase YUCCA1 (406 aa).

Residue 21-26 (GAGPSG) coordinates FAD. 184-189 (GCGNSG) contributes to the NADP(+) binding site.

Belongs to the FMO family. FAD is required as a cofactor. As to expression, expressed in coleoptile tips, root tips, leaf blade tips, shoot apical meristem, vasculature of stems and flowers.

The catalysed reaction is indole-3-pyruvate + NADPH + O2 + H(+) = (indol-3-yl)acetate + CO2 + NADP(+) + H2O. Involved in auxin biosynthesis. Converts the indole-3-pyruvic acid (IPA) produced by the TAA family to indole-3-acetic acid (IAA). Functions downstream of TAR2 in auxin biosynthesis. Functions upstream of WOX11, a transcription factor that promotes the development of crown roots. The sequence is that of Indole-3-pyruvate monooxygenase YUCCA1 from Oryza sativa subsp. japonica (Rice).